The chain runs to 137 residues: Large ribosomal subunit protein bL12 (137 aa).

It belongs to the bacterial ribosomal protein bL12 family. As to quaternary structure, homodimer. Part of the ribosomal stalk of the 50S ribosomal subunit. Forms a multimeric L10(L12)X complex, where L10 forms an elongated spine to which 2 to 4 L12 dimers bind in a sequential fashion. Binds GTP-bound translation factors.

Functionally, forms part of the ribosomal stalk which helps the ribosome interact with GTP-bound translation factors. Is thus essential for accurate translation. The chain is Large ribosomal subunit protein bL12 from Gloeobacter violaceus (strain ATCC 29082 / PCC 7421).